An 89-amino-acid polypeptide reads, in one-letter code: Cell division topological specificity factor (89 aa).

It belongs to the MinE family.

Prevents the cell division inhibition by proteins MinC and MinD at internal division sites while permitting inhibition at polar sites. This ensures cell division at the proper site by restricting the formation of a division septum at the midpoint of the long axis of the cell. The protein is Cell division topological specificity factor of Klebsiella pneumoniae (strain 342).